A 125-amino-acid chain; its full sequence is UPF0325 protein Ping_0715 (125 aa).

The protein belongs to the UPF0325 family.

The sequence is that of UPF0325 protein Ping_0715 from Psychromonas ingrahamii (strain DSM 17664 / CCUG 51855 / 37).